The chain runs to 273 residues: Pyridoxal phosphate homeostasis protein (273 aa).

The residue at position 6 (serine 6) is a Phosphoserine. At lysine 47 the chain carries N6-(pyridoxal phosphate)lysine. At tyrosine 69 the chain carries Phosphotyrosine. At lysine 125 the chain carries N6-succinyllysine. Phosphoserine is present on residues serine 226 and serine 244. Residues 251 to 260 (DYSKKTDKPA) show a composition bias toward basic and acidic residues. Residues 251–273 (DYSKKTDKPAAELQAPEEVAQAH) form a disordered region.

This sequence belongs to the pyridoxal phosphate-binding protein YggS/PROSC family.

In terms of biological role, pyridoxal 5'-phosphate (PLP)-binding protein, which may be involved in intracellular homeostatic regulation of pyridoxal 5'-phosphate (PLP), the active form of vitamin B6. The chain is Pyridoxal phosphate homeostasis protein from Bos taurus (Bovine).